A 270-amino-acid polypeptide reads, in one-letter code: Formamidopyrimidine-DNA glycosylase (270 aa).

The active-site Schiff-base intermediate with DNA is Pro-2. The active-site Proton donor is the Glu-3. Lys-58 serves as the catalytic Proton donor; for beta-elimination activity. Residues His-91, Arg-110, and Arg-151 each contribute to the DNA site. Residues 236–270 form an FPG-type zinc finger; it reads FVYGRGGEFCKVCGSTLREIRLGQRASVYCPRCQR. The Proton donor; for delta-elimination activity role is filled by Arg-260.

The protein belongs to the FPG family. In terms of assembly, monomer. It depends on Zn(2+) as a cofactor.

It carries out the reaction Hydrolysis of DNA containing ring-opened 7-methylguanine residues, releasing 2,6-diamino-4-hydroxy-5-(N-methyl)formamidopyrimidine.. It catalyses the reaction 2'-deoxyribonucleotide-(2'-deoxyribose 5'-phosphate)-2'-deoxyribonucleotide-DNA = a 3'-end 2'-deoxyribonucleotide-(2,3-dehydro-2,3-deoxyribose 5'-phosphate)-DNA + a 5'-end 5'-phospho-2'-deoxyribonucleoside-DNA + H(+). Functionally, involved in base excision repair of DNA damaged by oxidation or by mutagenic agents. Acts as a DNA glycosylase that recognizes and removes damaged bases. Has a preference for oxidized purines, such as 7,8-dihydro-8-oxoguanine (8-oxoG). Has AP (apurinic/apyrimidinic) lyase activity and introduces nicks in the DNA strand. Cleaves the DNA backbone by beta-delta elimination to generate a single-strand break at the site of the removed base with both 3'- and 5'-phosphates. In Pseudomonas aeruginosa (strain LESB58), this protein is Formamidopyrimidine-DNA glycosylase.